Here is a 144-residue protein sequence, read N- to C-terminus: Transcription antitermination protein NusB (144 aa).

Belongs to the NusB family.

Its function is as follows. Involved in transcription antitermination. Required for transcription of ribosomal RNA (rRNA) genes. Binds specifically to the boxA antiterminator sequence of the ribosomal RNA (rrn) operons. The polypeptide is Transcription antitermination protein NusB (Blochmanniella pennsylvanica (strain BPEN)).